The following is a 429-amino-acid chain: Histidine--tRNA ligase (429 aa).

Belongs to the class-II aminoacyl-tRNA synthetase family. In terms of assembly, homodimer.

The protein resides in the cytoplasm. It catalyses the reaction tRNA(His) + L-histidine + ATP = L-histidyl-tRNA(His) + AMP + diphosphate + H(+). The chain is Histidine--tRNA ligase from Streptococcus pneumoniae serotype 2 (strain D39 / NCTC 7466).